The sequence spans 922 residues: Golgi-associated RAB2 interactor protein 5B (922 aa).

Disordered regions lie at residues 244-264, 292-317, 373-404, 424-597, 758-830, and 842-869; these read DVRK…DRTH, QSSP…SPSH, TPYS…KAPS, AVPA…TQET, QPES…LRPS, and ATAR…LATV. Positions 292–305 are enriched in polar residues; that stretch reads QSSPKACTSASDEA. Over residues 431–441 the composition is skewed to pro residues; it reads KPPPGLAPPQK. 2 stretches are compositionally biased toward low complexity: residues 442-458 and 471-495; these read APAA…VPAP and KAPA…ASAV. Residues 496–507 are compositionally biased toward pro residues; sequence PAPPQKTPPPSQ. Basic and acidic residues predominate over residues 758 to 788; sequence QPESHTWVKEGKRPWGEMKEQPWGEMKEPPW.

The protein belongs to the GARIN family.

In Homo sapiens (Human), this protein is Golgi-associated RAB2 interactor protein 5B.